A 508-amino-acid chain; its full sequence is CUGBP Elav-like family member 2 (508 aa).

Necessary for RNA-binding, TNNT2 exon 5 and NMDA R1 exon 21 inclusion stretches follow at residues 1–283 (MRCP…LQNL) and 357–508 (LAGM…SKPY). 3 RRM domains span residues 40-123 (IKMF…PADS), 132-212 (RKLF…FADT), and 423-501 (ANLF…LKRS).

It belongs to the CELF/BRUNOL family. As to quaternary structure, interacts with A1CF. In terms of tissue distribution, expressed in frontal cortex. Isoform 1 is expressed in brain and lung. Isoform 2 is expressed in heart, brain, placenta, lung, liver, kidney, skeletal muscle and pancreas. Isoform 4 is expressed in heart, lung, skeletal muscle, kidney and pancreas.

It is found in the nucleus. Its subcellular location is the cytoplasm. RNA-binding protein implicated in the regulation of several post-transcriptional events. Involved in pre-mRNA alternative splicing, mRNA translation and stability. Mediates exon inclusion and/or exclusion in pre-mRNA that are subject to tissue-specific and developmentally regulated alternative splicing. Specifically activates exon 5 inclusion of TNNT2 in embryonic, but not adult, skeletal muscle. Activates TNNT2 exon 5 inclusion by antagonizing the repressive effect of PTB. Acts both as an activator and as a repressor of a pair of coregulated exons: promotes inclusion of the smooth muscle (SM) exon but exclusion of the non-muscle (NM) exon in actinin pre-mRNAs. Promotes inclusion of exonS 21 and exclusion of exon 5 of the NMDA receptor R1 pre-mRNA. Involved in the apoB RNA editing activity. Increases COX2 mRNA stability and inhibits COX2 mRNA translation in epithelial cells after radiation injury. Modulates the cellular apoptosis program by regulating COX2-mediated prostaglandin E2 (PGE2) expression. Binds to (CUG)n triplet repeats in the 3'-UTR of transcripts such as DMPK. Binds to the muscle-specific splicing enhancer (MSE) intronic sites flanking the TNNT2 alternative exon 5. Binds preferentially to UG-rich sequences, in particular UG repeat and UGUU motifs. Binds to apoB mRNA, specifically to AU-rich sequences located immediately upstream of the edited cytidine. Binds AU-rich sequences in the 3'-UTR of COX2 mRNA. Binds to an intronic RNA element responsible for the silencing of exon 21 splicing. Binds to (CUG)n repeats. May be a specific regulator of miRNA biogenesis. Binds to primary microRNA pri-MIR140 and, with CELF1, negatively regulates the processing to mature miRNA. This chain is CUGBP Elav-like family member 2 (CELF2), found in Homo sapiens (Human).